We begin with the raw amino-acid sequence, 295 residues long: Forkhead box protein N5 (295 aa).

Residues 119–146 are disordered; it reads STVEDSEDEAPTSCSDLMTDDDNDDSYN. The fork-head DNA-binding region spans 178–275; sequence RPPLNYCNLI…NEMHALSDDL (98 aa).

As to expression, ubiquitously expressed in early cleavage stage and gastrula stage embryos.

The protein localises to the nucleus. In Xenopus laevis (African clawed frog), this protein is Forkhead box protein N5.